The primary structure comprises 137 residues: DNA-binding protein H-NS (137 aa).

Residues 13–65 adopt a coiled-coil conformation; sequence TLRAQARECTLETLEEMLEKLEVVVNERREEESAAAAEVEERTRKLQQYREML. A DNA-binding region spans residues 112-117; it reads QGRTPA.

This sequence belongs to the histone-like protein H-NS family. Homodimer that oligomerizes on DNA into higher-order complexes that form bridges between disparate regions of DNA compacting it. Interacts with Hha, YdgT and StpA.

It localises to the cytoplasm. It is found in the nucleoid. A DNA-binding protein implicated in transcriptional repression and chromosome organization and compaction. Binds AT-rich DNA, repressing its transcription; about 754/4438 tested genes (15%) bind to H-NS, 70% of these are AT-rich and correspond to horizontally transferred geness (HTG), thus playing a central role in silencing foreign genes. This offers the selective advantage of silencing foreign DNA. Binds nucleation sites in AT-rich DNA and bridges them, forming higher-order nucleoprotein complexes and condensing the chromosome. A subset of genes are repressed by H-NS in association with Hha and/or YdgT. This is DNA-binding protein H-NS (hns) from Salmonella typhimurium (strain 14028s / SGSC 2262).